A 121-amino-acid chain; its full sequence is Small ribosomal subunit protein uS13 (121 aa).

Residues 93-121 (RGLPVRGQNTKNNARTRKGPRRTVANKKK) form a disordered region. Residues 106–121 (ARTRKGPRRTVANKKK) show a composition bias toward basic residues.

Belongs to the universal ribosomal protein uS13 family. As to quaternary structure, part of the 30S ribosomal subunit. Forms a loose heterodimer with protein S19. Forms two bridges to the 50S subunit in the 70S ribosome.

Its function is as follows. Located at the top of the head of the 30S subunit, it contacts several helices of the 16S rRNA. In the 70S ribosome it contacts the 23S rRNA (bridge B1a) and protein L5 of the 50S subunit (bridge B1b), connecting the 2 subunits; these bridges are implicated in subunit movement. Contacts the tRNAs in the A and P-sites. The protein is Small ribosomal subunit protein uS13 of Bacillus licheniformis (strain ATCC 14580 / DSM 13 / JCM 2505 / CCUG 7422 / NBRC 12200 / NCIMB 9375 / NCTC 10341 / NRRL NRS-1264 / Gibson 46).